The chain runs to 339 residues: DNA-directed RNA polymerase subunit alpha (339 aa).

Residues 1–233 (MVREEVAGST…DLFLPFLHAE (233 aa)) form an alpha N-terminal domain (alpha-NTD) region. An alpha C-terminal domain (alpha-CTD) region spans residues 264-339 (KKGIPLNCIF…IDLLKNKLSF (76 aa)).

The protein belongs to the RNA polymerase alpha chain family. In plastids the minimal PEP RNA polymerase catalytic core is composed of four subunits: alpha, beta, beta', and beta''. When a (nuclear-encoded) sigma factor is associated with the core the holoenzyme is formed, which can initiate transcription.

The protein localises to the plastid. The protein resides in the chloroplast. The enzyme catalyses RNA(n) + a ribonucleoside 5'-triphosphate = RNA(n+1) + diphosphate. Its function is as follows. DNA-dependent RNA polymerase catalyzes the transcription of DNA into RNA using the four ribonucleoside triphosphates as substrates. The polypeptide is DNA-directed RNA polymerase subunit alpha (Elymus californicus (California bottlebrush grass)).